Reading from the N-terminus, the 150-residue chain is UPF0179 protein Mbur_1033 (150 aa).

This sequence belongs to the UPF0179 family.

In Methanococcoides burtonii (strain DSM 6242 / NBRC 107633 / OCM 468 / ACE-M), this protein is UPF0179 protein Mbur_1033.